Consider the following 93-residue polypeptide: Probable Fe(2+)-trafficking protein (93 aa).

Belongs to the Fe(2+)-trafficking protein family.

Could be a mediator in iron transactions between iron acquisition and iron-requiring processes, such as synthesis and/or repair of Fe-S clusters in biosynthetic enzymes. The polypeptide is Probable Fe(2+)-trafficking protein (Acidithiobacillus ferrooxidans (strain ATCC 23270 / DSM 14882 / CIP 104768 / NCIMB 8455) (Ferrobacillus ferrooxidans (strain ATCC 23270))).